Reading from the N-terminus, the 287-residue chain is Probable 3-hydroxybutyryl-CoA dehydrogenase (287 aa).

This sequence belongs to the 3-hydroxyacyl-CoA dehydrogenase family.

The catalysed reaction is (3S)-3-hydroxybutanoyl-CoA + NADP(+) = acetoacetyl-CoA + NADPH + H(+). Its pathway is lipid metabolism; butanoate metabolism. This Bacillus subtilis (strain 168) protein is Probable 3-hydroxybutyryl-CoA dehydrogenase (mmgB).